Reading from the N-terminus, the 149-residue chain is MKVILKQDVSNLGKRFDVVDVKDGYAIHFLFPKKLAAPLTKKSLQDRDLFLKKQQEHYEINKALSHKLKEVIEQTELHFSLKEHNGRPYGSIITKQIINQAHTKGMALQKFMFKDNVRLGFGDHEITLHIFEDTTAVLKVKVTPDNGVK.

Belongs to the bacterial ribosomal protein bL9 family.

Its function is as follows. Binds to the 23S rRNA. The protein is Large ribosomal subunit protein bL9 of Mycoplasma pneumoniae (strain ATCC 29342 / M129 / Subtype 1) (Mycoplasmoides pneumoniae).